The chain runs to 153 residues: Urease accessory protein UreE (153 aa).

Belongs to the UreE family.

It is found in the cytoplasm. Its function is as follows. Involved in urease metallocenter assembly. Binds nickel. Probably functions as a nickel donor during metallocenter assembly. The protein is Urease accessory protein UreE of Acetivibrio thermocellus (strain ATCC 27405 / DSM 1237 / JCM 9322 / NBRC 103400 / NCIMB 10682 / NRRL B-4536 / VPI 7372) (Clostridium thermocellum).